Here is a 133-residue protein sequence, read N- to C-terminus: Phosphomevalonate dehydratase small subunit (133 aa).

The active-site Proton acceptor is S62.

It belongs to the AcnX type II small subunit family. As to quaternary structure, heterodimer composed of a large subunit (PMDh-L) and a small subunit (PMDh-S).

The catalysed reaction is (R)-5-phosphomevalonate = (2E)-3-methyl-5-phosphooxypent-2-enoate + H2O. The protein operates within isoprenoid biosynthesis; isopentenyl diphosphate biosynthesis via mevalonate pathway. Its function is as follows. Component of a hydro-lyase that catalyzes the dehydration of mevalonate 5-phosphate (MVA5P) to form trans-anhydromevalonate 5-phosphate (tAHMP). Involved in the archaeal mevalonate (MVA) pathway, which provides fundamental precursors for isoprenoid biosynthesis, such as isopentenyl diphosphate (IPP) and dimethylallyl diphosphate (DMAPP). This Thermococcus kodakarensis (strain ATCC BAA-918 / JCM 12380 / KOD1) (Pyrococcus kodakaraensis (strain KOD1)) protein is Phosphomevalonate dehydratase small subunit.